A 385-amino-acid chain; its full sequence is Dual-specificity RNA methyltransferase RlmN (385 aa).

Catalysis depends on E113, which acts as the Proton acceptor. The region spanning V120–R352 is the Radical SAM core domain. C127 and C363 form a disulfide bridge. [4Fe-4S] cluster-binding residues include C134, C138, and C141. S-adenosyl-L-methionine contacts are provided by residues G189–E190, S221, S243–H245, and N320. The active-site S-methylcysteine intermediate is C363.

Belongs to the radical SAM superfamily. RlmN family. It depends on [4Fe-4S] cluster as a cofactor.

It is found in the cytoplasm. The catalysed reaction is adenosine(2503) in 23S rRNA + 2 reduced [2Fe-2S]-[ferredoxin] + 2 S-adenosyl-L-methionine = 2-methyladenosine(2503) in 23S rRNA + 5'-deoxyadenosine + L-methionine + 2 oxidized [2Fe-2S]-[ferredoxin] + S-adenosyl-L-homocysteine. The enzyme catalyses adenosine(37) in tRNA + 2 reduced [2Fe-2S]-[ferredoxin] + 2 S-adenosyl-L-methionine = 2-methyladenosine(37) in tRNA + 5'-deoxyadenosine + L-methionine + 2 oxidized [2Fe-2S]-[ferredoxin] + S-adenosyl-L-homocysteine. In terms of biological role, specifically methylates position 2 of adenine 2503 in 23S rRNA and position 2 of adenine 37 in tRNAs. m2A2503 modification seems to play a crucial role in the proofreading step occurring at the peptidyl transferase center and thus would serve to optimize ribosomal fidelity. The chain is Dual-specificity RNA methyltransferase RlmN from Phenylobacterium zucineum (strain HLK1).